The primary structure comprises 122 residues: Class I hydrophobin 2 (122 aa).

The N-terminal stretch at 1–22 is a signal peptide; that stretch reads MFARVSTLFAMFFLGLALMVSA. 4 disulfides stabilise this stretch: Cys40-Cys101, Cys47-Cys95, Cys48-Cys81, and Cys102-Cys115.

Belongs to the fungal hydrophobin family. As to quaternary structure, self-assembles to form functional amyloid fibrils called rodlets. Self-assembly into fibrillar rodlets occurs spontaneously at hydrophobic:hydrophilic interfaces and the rodlets further associate laterally to form amphipathic monolayers.

Its subcellular location is the secreted. It localises to the cell wall. In terms of biological role, aerial growth, conidiation, and dispersal of filamentous fungi in the environment rely upon a capability of their secreting small amphipathic proteins called hydrophobins (HPBs) with low sequence identity. Class I can self-assemble into an outermost layer of rodlet bundles on aerial cell surfaces, conferring cellular hydrophobicity that supports fungal growth, development and dispersal; whereas Class II form highly ordered films at water-air interfaces through intermolecular interactions but contribute nothing to the rodlet structure. Hah2 is a class I hydrophobin that is involved in aerial growth of mycelia, but does not play a role in pathogenesis. The sequence is that of Class I hydrophobin 2 from Heterobasidion annosum (Root rot fungus).